Consider the following 196-residue polypeptide: Alpha-crystallin A chain (196 aa).

Position 1 is an N-acetylmethionine (Met-1). The interval 1 to 63 (MDVTIQHPWF…RTVLDSCISE (63 aa)) is required for complex formation with BFSP1 and BFSP2. Gln-6 carries the deamidated glutamine; partial modification. A Phosphoserine modification is found at Ser-45. At Gln-50 the chain carries Deamidated glutamine; partial. Residues 76-185 (HAGNPENNPI…GHSERAIPVS (110 aa)) enclose the sHSP domain. Residues Lys-93 and Lys-122 each carry the N6-acetyllysine modification. His-123 serves as a coordination point for Zn(2+). Asn-124 carries the deamidated asparagine; partial modification. Zn(2+) contacts are provided by Glu-125 and His-130. Residue Ser-145 is modified to Phosphoserine. A Deamidated glutamine; partial modification is found at Gln-170. The tract at residues 170–196 (QSGLDAGHSERAIPVSQEEKPSSAPLF) is disordered. A compositionally biased stretch (basic and acidic residues) spans 176–190 (GHSERAIPVSQEEKP). His-177 serves as a coordination point for Zn(2+). A glycan (O-linked (GlcNAc) serine) is linked at Ser-185.

The protein belongs to the small heat shock protein (HSP20) family. Heteromer composed of three CRYAA and one CRYAB subunits. Inter-subunit bridging via zinc ions enhances stability, which is crucial as there is no protein turn over in the lens. Can also form homodimers and homotetramers (dimers of dimers) which serve as the building blocks of homooligomers. Within homooligomers, the zinc-binding motif is created from residues of 3 different molecules. His-123 and Glu-125 from one molecule are ligands of the zinc ion, and His-130 and His-177 residues from additional molecules complete the site with tetrahedral coordination geometry. Part of a complex required for lens intermediate filament formation composed of BFSP1, BFSP2 and CRYAA. Post-translationally, acetylation at Lys-93 may increase chaperone activity. Undergoes age-dependent proteolytical cleavage at the C-terminus.

The protein resides in the cytoplasm. It is found in the nucleus. Its function is as follows. Contributes to the transparency and refractive index of the lens. Acts as a chaperone, preventing aggregation of various proteins under a wide range of stress conditions. Required for the correct formation of lens intermediate filaments as part of a complex composed of BFSP1, BFSP2 and CRYAA. The polypeptide is Alpha-crystallin A chain (CRYAA) (Spalax ehrenbergi (Middle East blind mole rat)).